The following is a 139-amino-acid chain: MILKPIGVVKSPFKTQNDAPRQGRFSDAVSEIAIFDEYADGLHKIENLRHIIVLYWMDKASRDKLRVVPPGETEERGVFTTRSPSRPNPIGLCVVEILEVERNRLKVRWLDALDGSPVIDIKKYSPEIDCVNQLEGQQP.

Residues 3–133 (LKPIGVVKSP…YSPEIDCVNQ (131 aa)) enclose the TsaA-like domain. Residues glutamine 16, 20–22 (PRQ), 58–59 (DK), arginine 82, leucine 92, and 113–116 (LDGS) contribute to the S-adenosyl-L-methionine site.

It belongs to the tRNA methyltransferase O family. In terms of assembly, homodimer.

This Archaeoglobus fulgidus (strain ATCC 49558 / DSM 4304 / JCM 9628 / NBRC 100126 / VC-16) protein is S-adenosyl-L-methionine-binding protein AF_0241.